Consider the following 391-residue polypeptide: Succinate--CoA ligase [ADP-forming] subunit beta (391 aa).

The ATP-grasp domain occupies 9 to 248; sequence KDILRKFGVA…ISEEDPFEVE (240 aa). Residues Lys-50, 57–59, Glu-103, Met-106, and Glu-111 each bind ATP; that span reads GRG. 2 residues coordinate Mg(2+): Asn-203 and Asp-217. Substrate is bound by residues Asn-268 and 325 to 327; that span reads GIV.

It belongs to the succinate/malate CoA ligase beta subunit family. Heterotetramer of two alpha and two beta subunits. Requires Mg(2+) as cofactor.

The enzyme catalyses succinate + ATP + CoA = succinyl-CoA + ADP + phosphate. It catalyses the reaction GTP + succinate + CoA = succinyl-CoA + GDP + phosphate. The protein operates within carbohydrate metabolism; tricarboxylic acid cycle; succinate from succinyl-CoA (ligase route): step 1/1. In terms of biological role, succinyl-CoA synthetase functions in the citric acid cycle (TCA), coupling the hydrolysis of succinyl-CoA to the synthesis of either ATP or GTP and thus represents the only step of substrate-level phosphorylation in the TCA. The beta subunit provides nucleotide specificity of the enzyme and binds the substrate succinate, while the binding sites for coenzyme A and phosphate are found in the alpha subunit. This Chlorobium luteolum (strain DSM 273 / BCRC 81028 / 2530) (Pelodictyon luteolum) protein is Succinate--CoA ligase [ADP-forming] subunit beta.